The chain runs to 342 residues: Erlin-1 (342 aa).

Topologically, residues 1–6 (MAHVGA) are cytoplasmic. A helical transmembrane segment spans residues 7–23 (VVAAMAGLMAILLHSSI). Residues 24-342 (HKIEEGHLAV…ASKPKASEGH (319 aa)) are Lumenal-facing. The N-linked (GlcNAc...) asparagine glycan is linked to asparagine 106. The segment at 308–342 (SSASRPAAGESEQLESLSMRESLKKASKPKASEGH) is disordered.

This sequence belongs to the band 7/mec-2 family.

The protein localises to the endoplasmic reticulum membrane. Mediates the endoplasmic reticulum-associated degradation (ERAD) of inositol 1,4,5-trisphosphate receptors (IP3Rs). Involved in regulation of cellular cholesterol homeostasis by regulation the SREBP signaling pathway. Binds cholesterol and may promote ER retention of the SCAP-SREBF complex. This Danio rerio (Zebrafish) protein is Erlin-1.